The primary structure comprises 78 residues: Beta-defensin 105A (78 aa).

The N-terminal stretch at 1-27 (MALIKKTFFFLFAMFFILVQLSSGCQA) is a signal peptide. Intrachain disulfides connect Cys43–Cys74, Cys53–Cys67, and Cys57–Cys73.

The protein belongs to the beta-defensin family.

The protein resides in the secreted. Has antimicrobial activity. The sequence is that of Beta-defensin 105A (DEFB105A) from Pan troglodytes (Chimpanzee).